The primary structure comprises 302 residues: Ornithine carbamoyltransferase (302 aa).

Residues 52 to 55 (STRT), glutamine 79, arginine 103, and 130 to 133 (HPCQ) contribute to the carbamoyl phosphate site. L-ornithine contacts are provided by residues asparagine 161, aspartate 221, and 225 to 226 (SM). Residues 261 to 262 (CL) and arginine 289 each bind carbamoyl phosphate.

The protein belongs to the aspartate/ornithine carbamoyltransferase superfamily. OTCase family.

It is found in the cytoplasm. The enzyme catalyses carbamoyl phosphate + L-ornithine = L-citrulline + phosphate + H(+). It participates in amino-acid biosynthesis; L-arginine biosynthesis; L-arginine from L-ornithine and carbamoyl phosphate: step 1/3. Its function is as follows. Reversibly catalyzes the transfer of the carbamoyl group from carbamoyl phosphate (CP) to the N(epsilon) atom of ornithine (ORN) to produce L-citrulline. The sequence is that of Ornithine carbamoyltransferase from Methanosarcina mazei (strain ATCC BAA-159 / DSM 3647 / Goe1 / Go1 / JCM 11833 / OCM 88) (Methanosarcina frisia).